A 1214-amino-acid chain; its full sequence is Peregrin (1214 aa).

The segment at Tyr21–His47 adopts a C2H2-type zinc-finger fold. Disordered regions lie at residues Tyr43–Arg87 and Val118–Pro177. A compositionally biased stretch (basic residues) spans Leu58–Gln67. Positions Arg59 to Tyr222 are interaction with KAT6A and KAT6B. Residues Gln74–Pro85 are compositionally biased toward low complexity. Residues Val119–Pro130 show a composition bias toward acidic residues. Position 120 is a phosphoserine (Ser120). At Lys147 the chain carries N6-acetyllysine. Over residues Ser148–Asn167 the composition is skewed to basic residues. At Ser238 the chain carries Phosphoserine. A PHD-type 1 zinc finger spans residues Asp273–Ser323. The segment at Ala327 to Val360 adopts a C2HC pre-PHD-type zinc-finger fold. Residues Leu384 to Thr448 form a PHD-type 2 zinc finger. The tract at residues Thr448–Lys489 is disordered. Residues Ser460 and Ser462 each carry the phosphoserine modification. A compositionally biased stretch (acidic residues) spans Gly464–Glu474. The interaction with MEAF6 and ING5 stretch occupies residues Leu501–Arg821. The interval Tyr543–Glu1079 is required for RUNX1 and RUNX2 transcriptional activation. Lys580 is subject to N6-acetyllysine. Residues Met628–Ala732 form the Bromo domain. The tract at residues Leu819 to Ser1062 is disordered. Over residues His825–Gly838 the composition is skewed to basic and acidic residues. Thr858 is modified (phosphothreonine). A compositionally biased stretch (low complexity) spans Thr858–Ser871. Phosphoserine occurs at positions 860, 917, 922, and 926. Positions Ser993–Ser1021 are enriched in low complexity. Residue Ser1076 is modified to Phosphoserine. In terms of domain architecture, PWWP spans Ala1085 to Asn1168. Ser1187 is modified (phosphoserine).

Component of some HBO1 complex composed of KAT7/HBO1, MEAF6, ING5, and BRPF1. Component of the MOZ/MORF complex composed at least of ING5, KAT6A, KAT6B, MEAF6 and one of BRPF1, BRD1/BRPF2 and BRPF3. Interacts (via PHD-type zinc finger domains) with unmethylated histone H3 at 'Lys-4' (H3K4me0). Interacts with trimethylated 'Lys-36' of histone H3 (H3K36me3). Interacts with ING5; interaction directs BRPF1 to H4K4me3-enriched chromatin at the 5' of active genes. Interacts with KAT7. Post-translationally, acetylated by KAT6A. As to expression, high levels in testis.

Its subcellular location is the nucleus. The protein localises to the chromosome. The protein resides in the cytoplasm. Functionally, scaffold subunit of various histone acetyltransferase (HAT) complexes, such as the MOZ/MORF and HBO1 complexes, which have a histone H3 acetyltransferase activity. Plays a key role in HBO1 complex by directing KAT7/HBO1 specificity towards histone H3 'Lys-14' acetylation (H3K14ac). Some HAT complexes preferentially mediate histone H3 'Lys-23' (H3K23ac) acetylation. Positively regulates the transcription of RUNX1 and RUNX2. This Homo sapiens (Human) protein is Peregrin.